We begin with the raw amino-acid sequence, 161 residues long: Cyclin-dependent protein kinase inhibitor SMR12 (161 aa).

The segment covering 84–93 (EEEEVVEEEN) has biased composition (acidic residues). The segment at 84-106 (EEEEVVEEENDGFKTPTRPENRI) is disordered.

Functionally, probable cyclin-dependent protein kinase (CDK) inhibitor that functions as a repressor of mitosis in the endoreduplication cell cycle. This is Cyclin-dependent protein kinase inhibitor SMR12 from Arabidopsis thaliana (Mouse-ear cress).